Here is a 266-residue protein sequence, read N- to C-terminus: Basic endochitinase C (266 aa).

The signal sequence occupies residues 1 to 23 (MRSLAVVVAVVATVAMAIGTAHG). 3 disulfide bridges follow: Cys46-Cys108, Cys120-Cys128, and Cys246-Cys259. The active-site Proton donor is Glu90.

It belongs to the glycosyl hydrolase 19 family. Chitinase class II subfamily. In terms of tissue distribution, localized to the starchy endoderm of the seed May localize to other parts of the seed including the aleurone cells (at protein level).

It catalyses the reaction Random endo-hydrolysis of N-acetyl-beta-D-glucosaminide (1-&gt;4)-beta-linkages in chitin and chitodextrins.. Functionally, defense against chitin-containing fungal pathogens. Binds the hyphal tips of fungi and degrades nascent chitin. This Secale cereale (Rye) protein is Basic endochitinase C.